The sequence spans 478 residues: ATP synthase subunit beta (478 aa).

Position 161–168 (161–168 (GGAGVGKT)) interacts with ATP.

The protein belongs to the ATPase alpha/beta chains family. In terms of assembly, F-type ATPases have 2 components, CF(1) - the catalytic core - and CF(0) - the membrane proton channel. CF(1) has five subunits: alpha(3), beta(3), gamma(1), delta(1), epsilon(1). CF(0) has four main subunits: a(1), b(1), b'(1) and c(9-12).

The protein localises to the cell inner membrane. The catalysed reaction is ATP + H2O + 4 H(+)(in) = ADP + phosphate + 5 H(+)(out). Functionally, produces ATP from ADP in the presence of a proton gradient across the membrane. The catalytic sites are hosted primarily by the beta subunits. In Gloeobacter violaceus (strain ATCC 29082 / PCC 7421), this protein is ATP synthase subunit beta.